The following is a 370-amino-acid chain: Phosphoserine aminotransferase (370 aa).

Met-1 carries the post-translational modification N-acetylmethionine. Residues His-44 and Arg-45 each coordinate O-phospho-L-serine. Residue Lys-51 is modified to N6-acetyllysine. Pyridoxal 5'-phosphate contacts are provided by Gly-79 and Trp-107. N6-acetyllysine is present on Lys-127. Thr-156, Asp-176, and Gln-199 together coordinate pyridoxal 5'-phosphate. Lys-200 bears the N6-(pyridoxal phosphate)lysine mark. Pyridoxal 5'-phosphate contacts are provided by Asn-241 and Thr-242. Residues Lys-269, Lys-318, and Lys-323 each carry the N6-acetyllysine modification. At Ser-331 the chain carries Phosphoserine. Lys-333 is modified (N6-acetyllysine). The O-phospho-L-serine site is built by His-335, Arg-336, and Arg-342.

Belongs to the class-V pyridoxal-phosphate-dependent aminotransferase family. SerC subfamily. In terms of assembly, homodimer. The cofactor is pyridoxal 5'-phosphate.

The enzyme catalyses O-phospho-L-serine + 2-oxoglutarate = 3-phosphooxypyruvate + L-glutamate. It functions in the pathway amino-acid biosynthesis; L-serine biosynthesis; L-serine from 3-phospho-D-glycerate: step 2/3. Its function is as follows. Involved in L-serine biosynthesis via the phosphorylated pathway, a three-step pathway converting the glycolytic intermediate 3-phospho-D-glycerate into L-serine. Catalyzes the second step, that is the pyridoxal 5'-phosphate-dependent transamination of 3-phosphohydroxypyruvate and L-glutamate to O-phosphoserine (OPS) and alpha-ketoglutarate. The sequence is that of Phosphoserine aminotransferase from Mus musculus (Mouse).